Consider the following 574-residue polypeptide: Putative dehydratase IlvD1 (574 aa).

2 residues coordinate [4Fe-4S] cluster: Cys124 and Cys197.

It belongs to the IlvD/Edd family. The cofactor is [4Fe-4S] cluster.

Involved in the degradation of galactose via the DeLey-Doudoroff pathway. This Rhizobium meliloti (strain 1021) (Ensifer meliloti) protein is Putative dehydratase IlvD1 (ilvD1).